The chain runs to 556 residues: MTMLNDPSKKYRAFPTIDLPDRTWPSKTIDAAPIWCSSDLRDGNQSLIEPMDSVKKLRFWKTLVSVGVKEIEASFPAASQTDFDFVRTLIEDGHIPDDTTIQVLTQAREDLIARTFESLRGAKKAIVHLYNATCPSFRRIVFNQDKAGVKEIAVNAAKLFVKYAAQQPETQWTFEYSPETFSATELEFAKEVCDAVIEVWNPTPENKVILNLPATVEVATPNIYADQIEWFGRHITRRDSVLISLHTHNDRGTGVAATELGLMAGADRVEGCLFGNGERTGNVDLVTVALNLYTQGINPELDFSDIDGVRKVVEECNQIPVHPRHPYVGDLVHTAFSGSHQDAIRKGFTQQKEGELWEVPYLPIDPADIGRSYEAVIRVNSQSGKGGIAYLLEQEYGISLPRRMQIEFSQVVQGETDRLGLEMTAEQIHALLRREYLQANTPYALISHRLQEENGNSAVDAEVHVDGETQHWRGKGKGALEALVAGLPVAVEIMDYNEHAIGSGTTAKAAAYIELRVNGDRAVHGVGIDENITTASFRALFSALNRSLSQAQAKAA.

Residues 33–307 (PIWCSSDLRD…NPELDFSDID (275 aa)) form the Pyruvate carboxyltransferase domain. Residues aspartate 42, histidine 246, histidine 248, and asparagine 282 each coordinate Mg(2+). The interval 439 to 556 (ANTPYALISH…SLSQAQAKAA (118 aa)) is regulatory domain.

The protein belongs to the alpha-IPM synthase/homocitrate synthase family. LeuA type 2 subfamily. Homodimer. Mg(2+) is required as a cofactor.

Its subcellular location is the cytoplasm. It catalyses the reaction 3-methyl-2-oxobutanoate + acetyl-CoA + H2O = (2S)-2-isopropylmalate + CoA + H(+). The protein operates within amino-acid biosynthesis; L-leucine biosynthesis; L-leucine from 3-methyl-2-oxobutanoate: step 1/4. In terms of biological role, catalyzes the condensation of the acetyl group of acetyl-CoA with 3-methyl-2-oxobutanoate (2-ketoisovalerate) to form 3-carboxy-3-hydroxy-4-methylpentanoate (2-isopropylmalate). The polypeptide is 2-isopropylmalate synthase (Pseudomonas syringae pv. tomato (strain ATCC BAA-871 / DC3000)).